We begin with the raw amino-acid sequence, 520 residues long: MSSPLASLSKTRKVPLPSEPMNPGRRGIRIYGDEDEVDMLSDGCGSEEKISVPSCYGGIGAPVSRQVPASHDSELMAFMTRKLWDLEQQVKAQTDEILSKDQKIAALEDLVQTLRPHPAEATLQRQEELETMCVQLQRQVREMERFLSDYGLQWVGEPMDQEDSESKTVSEHGERDWMTAKKFWKPGDSLAPPEVDFDRLLASLQDLSELVVEGDTQVTPVPGGARLRTLEPIPLKLYRNGIMMFDGPFQPFYDPSTQRCLRDILDGFFPSELQRLYPNGVPFKVSDLRNQVYLEDGLDPFPGEGRVVGRQLMHKALDRVEEHPGSRMTAEKFLNRLPKFVIRQGEVIDIRGPIRDTLQNCCPLPARIQEIVVETPTLAAERERSQESPNTPAPPLSMLRIKSENGEQAFLLMMQPDNTIGDVRALLAQARVMDASAFEIFSTFPPTLYQDDTLTLQAAGLVPKAALLLRARRAPKSSLKFSPGPCPGPGPGPSPGPGPGPSPGPGPGPSPCPGPSPSPQ.

The disordered stretch occupies residues 1-26; it reads MSSPLASLSKTRKVPLPSEPMNPGRR. Positions 76 to 149 form a coiled coil; it reads MAFMTRKLWD…VREMERFLSD (74 aa). Residues 230–294 enclose the SEP domain; that stretch reads LEPIPLKLYR…VSDLRNQVYL (65 aa). Positions 392-469 constitute a UBX domain; it reads PAPPLSMLRI…GLVPKAALLL (78 aa). The interval 476–520 is disordered; that stretch reads KSSLKFSPGPCPGPGPGPSPGPGPGPSPGPGPGPSPCPGPSPSPQ. Positions 484 to 520 are enriched in pro residues; it reads GPCPGPGPGPSPGPGPGPSPGPGPGPSPCPGPSPSPQ. A run of 3 repeats spans residues 487–494, 495–502, and 503–510. The segment at 487–510 is 3 X 8 AA tandem repeats of P-G-P-G-P-G-P-S; the sequence is PGPGPGPSPGPGPGPSPGPGPGPS.

In terms of assembly, interacts with GNA12, GNA13, RND1, RND2 and RND3.

Its subcellular location is the cytoplasm. It localises to the cytoskeleton. May be involved in the reorganization of actin cytoskeleton mediated by RND1, RND2 and RND3. Promotes RHOA activation mediated by GNA12 and GNA13. In Homo sapiens (Human), this protein is UBX domain-containing protein 11 (UBXN11).